The following is a 911-amino-acid chain: Nitrate reductase [NADH], clone PBNBR1412 (911 aa).

The disordered stretch occupies residues 53-72 (NDAVDDSYDSSDDEDESHNR). Over residues 56 to 68 (VDDSYDSSDDEDE) the composition is skewed to acidic residues. Cys-191 provides a ligand contact to Mo-molybdopterin. A Cytochrome b5 heme-binding domain is found at 539 to 614 (AKMYSMSEVR…LEDYRIGELI (76 aa)). Heme contacts are provided by His-574 and His-597. Positions 654 to 766 (REKVPVTLIE…KGPLGHIEYL (113 aa)) constitute an FAD-binding FR-type domain. Residues 706–709 (RAYT), 723–727 (VVKVY), Phe-728, Phe-735, 740–742 (LMS), and Thr-793 contribute to the FAD site.

The protein belongs to the nitrate reductase family. Homodimer. The cofactor is FAD. Requires heme as cofactor. Mo-molybdopterin is required as a cofactor.

The catalysed reaction is nitrite + NAD(+) + H2O = nitrate + NADH + H(+). Nitrate reductase is a key enzyme involved in the first step of nitrate assimilation in plants, fungi and bacteria. The chain is Nitrate reductase [NADH], clone PBNBR1412 (NIA2) from Brassica napus (Rape).